Reading from the N-terminus, the 86-residue chain is RNA-binding protein Hfq (86 aa).

Residues 9-68 (DPYLNTLRKEKVPVSIYLVNGIKLQGSIESFDQFVVLLKNTVSQMVYKHAISTVVPARPV) enclose the Sm domain. The tract at residues 66 to 86 (RPVRLPSPSDSEHGDSEPGNA) is disordered. The span at 75–86 (DSEHGDSEPGNA) shows a compositional bias: basic and acidic residues.

This sequence belongs to the Hfq family. Homohexamer.

Functionally, RNA chaperone that binds small regulatory RNA (sRNAs) and mRNAs to facilitate mRNA translational regulation in response to envelope stress, environmental stress and changes in metabolite concentrations. Also binds with high specificity to tRNAs. This Pseudomonas putida (strain W619) protein is RNA-binding protein Hfq.